A 387-amino-acid chain; its full sequence is Protein FAM153B (387 aa).

Disordered regions lie at residues 233–256 and 327–374; these read SYNG…RGDL and TITG…KKSR. The segment covering 336–345 has biased composition (low complexity); the sequence is SASPSSAPAE. The span at 347 to 359 shows a compositional bias: basic and acidic residues; sequence ATEKTKVEEEVKT. The span at 360-374 shows a compositional bias: basic residues; the sequence is RKPKKKTRKPSKKSR.

The protein belongs to the FAM153 family.

The polypeptide is Protein FAM153B (FAM153B) (Homo sapiens (Human)).